A 205-amino-acid chain; its full sequence is uncharacterized protein (205 aa).

Residues 1–25 (MSNNNNEAQQPVESTNVESQQNVVQ) are compositionally biased toward polar residues. The disordered stretch occupies residues 1–205 (MSNNNNEAQQ…TSDPAQQVEA (205 aa)). A compositionally biased stretch (low complexity) spans 32–79 (NENNDNNNNNNNNNNNNNNNNNNNNNNNNSNNNNNSSNNENNENNENN). A compositionally biased stretch (basic and acidic residues) spans 80 to 122 (SCEKSEQEKPKEPEEPVQEEKSKEPCDQQKVKENEPAEEKETE). Low complexity-rich tracts occupy residues 123–132 (PAAPVEPENP) and 146–162 (QHQQ…NGES). Over residues 170-185 (SENKKRSIDEAGDIKD) the composition is skewed to basic and acidic residues. Positions 194–205 (VETSDPAQQVEA) are enriched in polar residues.

This is an uncharacterized protein from Dictyostelium discoideum (Social amoeba).